A 352-amino-acid polypeptide reads, in one-letter code: 3-isopropylmalate dehydrogenase (352 aa).

71 to 87 provides a ligand contact to NAD(+); it reads GAHDSAWNQLPRHLRPE. Residues Arg94, Arg104, Arg132, and Asp218 each coordinate substrate. Mg(2+) contacts are provided by Asp218, Asp242, and Asp246. 275 to 287 provides a ligand contact to NAD(+); sequence GSAPDIAGQGVAN.

It belongs to the isocitrate and isopropylmalate dehydrogenases family. LeuB type 1 subfamily. As to quaternary structure, homodimer. It depends on Mg(2+) as a cofactor. The cofactor is Mn(2+).

It is found in the cytoplasm. It carries out the reaction (2R,3S)-3-isopropylmalate + NAD(+) = 4-methyl-2-oxopentanoate + CO2 + NADH. It participates in amino-acid biosynthesis; L-leucine biosynthesis; L-leucine from 3-methyl-2-oxobutanoate: step 3/4. In terms of biological role, catalyzes the oxidation of 3-carboxy-2-hydroxy-4-methylpentanoate (3-isopropylmalate) to 3-carboxy-4-methyl-2-oxopentanoate. The product decarboxylates to 4-methyl-2 oxopentanoate. This Deinococcus radiodurans (strain ATCC 13939 / DSM 20539 / JCM 16871 / CCUG 27074 / LMG 4051 / NBRC 15346 / NCIMB 9279 / VKM B-1422 / R1) protein is 3-isopropylmalate dehydrogenase.